Reading from the N-terminus, the 76-residue chain is uncharacterized protein (76 aa).

The signal sequence occupies residues 1–22 (MFTKALSVVLLTCALFSGQLMA).

This is an uncharacterized protein from Escherichia coli O157:H7.